A 213-amino-acid polypeptide reads, in one-letter code: Skin granule protein (213 aa).

An N-terminal signal peptide occupies residues 1 to 26 (METMYHRFLCIPFLLILGLAQGQSKG). 3 tandem repeats follow at residues 27–48 (LQTVTTFRTGLKPIDVTAIRTG), 49–70 (LQPIATFHTGQKPIDVTAIRTG), and 71–92 (LQPIATFHTGLQPVDVTAIRTG). The tract at residues 27–104 (LQTVTTFRTG…PIATFQTGVQ (78 aa)) is 4 X 22 AA approximate tandem repeats. A 4; truncated repeat occupies 93-104 (LQPIATFQTGVQ). The interval 162-213 (WHGGRNGHKMKKLGKKKHHKNRHGGKNHHKMKKIGKHHGGGRKFGKKHRHHK) is disordered. Over residues 166–213 (RNGHKMKKLGKKKHHKNRHGGKNHHKMKKIGKHHGGGRKFGKKHRHHK) the composition is skewed to basic residues.

The protein resides in the secreted. This chain is Skin granule protein (sgp), found in Xenopus laevis (African clawed frog).